Reading from the N-terminus, the 291-residue chain is Pentonolactonase XacC (291 aa).

A divalent metal cation is bound by residues glutamate 15, asparagine 141, and aspartate 191. The active-site Proton donor/acceptor is the aspartate 191.

The protein belongs to the SMP-30/CGR1 family. In terms of assembly, monomer. A divalent metal cation serves as cofactor.

It catalyses the reaction L-arabinono-1,4-lactone + H2O = L-arabinonate + H(+). The catalysed reaction is D-xylono-1,4-lactone + H2O = D-xylonate + H(+). The protein operates within carbohydrate degradation. Functionally, pentonolactonase involved in D-arabinose and D-xylose catabolism. Catalyzes the hydrolysis of both L-arabino-gamma-lactone and D-xylono-gamma-lactone to the corresponding acids. Can also hydrolyze D-galactono-gamma-lactone and D-glucono-delta-lactone. In Haloferax volcanii (strain ATCC 29605 / DSM 3757 / JCM 8879 / NBRC 14742 / NCIMB 2012 / VKM B-1768 / DS2) (Halobacterium volcanii), this protein is Pentonolactonase XacC.